A 425-amino-acid polypeptide reads, in one-letter code: Glutamyl-tRNA reductase (425 aa).

Substrate-binding positions include 47–50, S107, 112–114, and Q118; these read TCNR and EDQ. Residue C48 is the Nucleophile of the active site. NADP(+) is bound at residue 187–192; sequence GAGHMA.

Belongs to the glutamyl-tRNA reductase family. As to quaternary structure, homodimer.

It catalyses the reaction (S)-4-amino-5-oxopentanoate + tRNA(Glu) + NADP(+) = L-glutamyl-tRNA(Glu) + NADPH + H(+). It participates in porphyrin-containing compound metabolism; protoporphyrin-IX biosynthesis; 5-aminolevulinate from L-glutamyl-tRNA(Glu): step 1/2. The protein operates within porphyrin-containing compound metabolism; chlorophyll biosynthesis. Its function is as follows. Catalyzes the NADPH-dependent reduction of glutamyl-tRNA(Glu) to glutamate 1-semialdehyde (GSA). The chain is Glutamyl-tRNA reductase from Roseiflexus castenholzii (strain DSM 13941 / HLO8).